A 409-amino-acid polypeptide reads, in one-letter code: Na(+)-translocating NADH-quinone reductase subunit F (409 aa).

The chain crosses the membrane as a helical span at residues 5–25; that stretch reads FIFGIGAFTAIVLVLAVVILI. A 2Fe-2S ferredoxin-type domain is found at 34-128; that stretch reads GDITISINDD…SMDVELPEEV (95 aa). [2Fe-2S] cluster contacts are provided by Cys-71, Cys-77, Cys-80, and Cys-112. Positions 131–271 constitute an FAD-binding FR-type domain; sequence VKKWECTVIS…SGPFGEFFAK (141 aa).

This sequence belongs to the NqrF family. Composed of six subunits; NqrA, NqrB, NqrC, NqrD, NqrE and NqrF. [2Fe-2S] cluster serves as cofactor. Requires FAD as cofactor.

It localises to the cell inner membrane. It catalyses the reaction a ubiquinone + n Na(+)(in) + NADH + H(+) = a ubiquinol + n Na(+)(out) + NAD(+). In terms of biological role, NQR complex catalyzes the reduction of ubiquinone-1 to ubiquinol by two successive reactions, coupled with the transport of Na(+) ions from the cytoplasm to the periplasm. The first step is catalyzed by NqrF, which accepts electrons from NADH and reduces ubiquinone-1 to ubisemiquinone by a one-electron transfer pathway. The chain is Na(+)-translocating NADH-quinone reductase subunit F from Actinobacillus succinogenes (strain ATCC 55618 / DSM 22257 / CCUG 43843 / 130Z).